We begin with the raw amino-acid sequence, 1081 residues long: DNA polymerase catalytic subunit (1081 aa).

It belongs to the DNA polymerase type-B family. As to quaternary structure, forms a complex with the ssDNA-binding protein UL29, the DNA polymerase processivity factor, and the alkaline exonuclease. Interacts with the putative helicase-primase complex subunit UL8; this interaction may coordinate leading and lagging strand DNA synthesis at the replication fork.

Its subcellular location is the host nucleus. It carries out the reaction DNA(n) + a 2'-deoxyribonucleoside 5'-triphosphate = DNA(n+1) + diphosphate. The catalysed reaction is Endonucleolytic cleavage to 5'-phosphomonoester.. Functionally, replicates viral genomic DNA. The replication complex is composed of six viral proteins: the DNA polymerase, processivity factor, primase, primase-associated factor, helicase, and ssDNA-binding protein. Additionally, the polymerase contains an intrinsic ribonuclease H (RNase H) activity that specifically degrades RNA/DNA heteroduplexes or duplex DNA substrates in the 5' to 3' direction. Therefore, it can catalyze the excision of the RNA primers that initiate the synthesis of Okazaki fragments at a replication fork during viral DNA replication. This Psittacid herpesvirus 1 (isolate Amazon parrot/-/97-0001/1997) (PsHV-1) protein is DNA polymerase catalytic subunit (UL30).